The sequence spans 259 residues: uncharacterized protein (259 aa).

The first 22 residues, 1 to 22 (MKHSKKLLLCISFLLITVFISG), serve as a signal peptide directing secretion. A lipid anchor (N-palmitoyl cysteine) is attached at Cys-23. Cys-23 is lipidated: S-diacylglycerol cysteine.

It belongs to the staphylococcal tandem lipoprotein family.

It localises to the cell membrane. This is an uncharacterized protein from Staphylococcus epidermidis (strain ATCC 35984 / DSM 28319 / BCRC 17069 / CCUG 31568 / BM 3577 / RP62A).